A 79-amino-acid polypeptide reads, in one-letter code: UPF0180 protein BcerKBAB4_1316 (79 aa).

It belongs to the UPF0180 family.

This Bacillus mycoides (strain KBAB4) (Bacillus weihenstephanensis) protein is UPF0180 protein BcerKBAB4_1316.